A 257-amino-acid chain; its full sequence is Type III pantothenate kinase (257 aa).

Residue 11 to 18 (DSGNTAIK) participates in ATP binding. Substrate contacts are provided by residues Tyr-96 and 103-106 (GCDR). The Proton acceptor role is filled by Asp-105. Asp-125 is a binding site for K(+). Thr-128 is an ATP binding site. Position 179 (Thr-179) interacts with substrate.

It belongs to the type III pantothenate kinase family. As to quaternary structure, homodimer. NH4(+) is required as a cofactor. It depends on K(+) as a cofactor.

It localises to the cytoplasm. The catalysed reaction is (R)-pantothenate + ATP = (R)-4'-phosphopantothenate + ADP + H(+). It participates in cofactor biosynthesis; coenzyme A biosynthesis; CoA from (R)-pantothenate: step 1/5. Its function is as follows. Catalyzes the phosphorylation of pantothenate (Pan), the first step in CoA biosynthesis. This Nitrosomonas eutropha (strain DSM 101675 / C91 / Nm57) protein is Type III pantothenate kinase.